Here is a 310-residue protein sequence, read N- to C-terminus: 4-hydroxyproline 2-epimerase (310 aa).

Residue Cys-85 is the Proton acceptor of the active site. Substrate contacts are provided by residues 86–87 (GH), His-205, and Asp-231. The active-site Proton donor is the Cys-235. Residue 236–237 (GT) coordinates substrate.

It belongs to the proline racemase family.

It carries out the reaction trans-4-hydroxy-L-proline = cis-4-hydroxy-D-proline. Catalyzes the epimerization of trans-4-hydroxy-L-proline (t4LHyp) to cis-4-hydroxy-D-proline (c4DHyp). May be involved in a degradation pathway of t4LHyp, which would allow L.aggregata to grow on t4LHyp as a sole carbon source. Displays no proline racemase activity. The protein is 4-hydroxyproline 2-epimerase of Roseibium aggregatum (strain ATCC 25650 / DSM 13394 / JCM 20685 / NBRC 16684 / NCIMB 2208 / IAM 12614 / B1) (Stappia aggregata).